Reading from the N-terminus, the 327-residue chain is Ornithine carbamoyltransferase (327 aa).

Carbamoyl phosphate contacts are provided by residues 56 to 59 (STRT), glutamine 83, arginine 107, and 134 to 137 (HPTQ). Residues asparagine 166, aspartate 230, and 234–235 (SM) each bind L-ornithine. Residues 269 to 270 (CL) and arginine 314 contribute to the carbamoyl phosphate site.

This sequence belongs to the aspartate/ornithine carbamoyltransferase superfamily. OTCase family.

It is found in the cytoplasm. The enzyme catalyses carbamoyl phosphate + L-ornithine = L-citrulline + phosphate + H(+). The protein operates within amino-acid degradation; L-arginine degradation via ADI pathway; carbamoyl phosphate from L-arginine: step 2/2. Functionally, reversibly catalyzes the transfer of the carbamoyl group from carbamoyl phosphate (CP) to the N(epsilon) atom of ornithine (ORN) to produce L-citrulline. The polypeptide is Ornithine carbamoyltransferase (Borreliella burgdorferi (strain ZS7) (Borrelia burgdorferi)).